The primary structure comprises 200 residues: AFSPRYIELAVVADNGMFTKYNSNLNTIRTRVHEMVNTVNGFYSSVNANASLANLQVWSIKDLIKVEKDSNKTLTSFGEWRERDLLPRISHDHAQLLTTIVFDNYVIGRSRSGKMCDPEQSVGVVRDHSKNNLWVAVTMAHELGHNLDMHHDDTCSCGAKSCIMASVLSKTKSYAFSTCSQNEYQTFLTKHNPQCILNEP.

One can recognise a Peptidase M12B domain in the interval Arg-5–Pro-200. The Ca(2+) site is built by Glu-8 and Asp-92. 3 cysteine pairs are disulfide-bonded: Cys-116–Cys-195, Cys-155–Cys-179, and Cys-157–Cys-162. His-141 serves as a coordination point for Zn(2+). Glu-142 is an active-site residue. His-145 and His-151 together coordinate Zn(2+). Residues Cys-195 and Asn-198 each contribute to the Ca(2+) site.

This sequence belongs to the venom metalloproteinase (M12B) family. P-I subfamily. Monomer. It depends on Zn(2+) as a cofactor. Expressed by the venom gland.

It is found in the secreted. In terms of biological role, zinc metalloprotease that displays fibrinogenolytic, gelatinase and weak hemorrhagic activities. Degrades the three chain of fibrinogen Aalpha-chain (FGA), Bbeta-chain (FGB), and gamma (FGG). This is Snake venom metalloproteinase BmooMP-I from Bothrops moojeni (Lance-headed viper).